The chain runs to 398 residues: UPF0261 protein RA0729 (398 aa).

It belongs to the UPF0261 family.

The chain is UPF0261 protein RA0729 from Rhizobium meliloti (strain 1021) (Ensifer meliloti).